Consider the following 384-residue polypeptide: Probable L-tyrosine/L-aspartate decarboxylase (384 aa).

At Lys233 the chain carries N6-(pyridoxal phosphate)lysine.

This sequence belongs to the group II decarboxylase family. MfnA subfamily. Pyridoxal 5'-phosphate is required as a cofactor.

The enzyme catalyses L-tyrosine + H(+) = tyramine + CO2. It catalyses the reaction L-aspartate + H(+) = beta-alanine + CO2. The protein operates within cofactor biosynthesis; methanofuran biosynthesis. It participates in cofactor biosynthesis; coenzyme A biosynthesis. Functionally, catalyzes the decarboxylation of L-tyrosine to produce tyramine for methanofuran biosynthesis. Can also catalyze the decarboxylation of L-aspartate to produce beta-alanine for coenzyme A (CoA) biosynthesis. The protein is Probable L-tyrosine/L-aspartate decarboxylase of Methanococcus maripaludis (strain DSM 14266 / JCM 13030 / NBRC 101832 / S2 / LL).